The chain runs to 46 residues: Large ribosomal subunit protein bL36 (46 aa).

It belongs to the bacterial ribosomal protein bL36 family.

The chain is Large ribosomal subunit protein bL36 from Escherichia coli O7:K1 (strain IAI39 / ExPEC).